The primary structure comprises 103 residues: Endoribonuclease MazF3 (103 aa).

Belongs to the PemK/MazF family. As to quaternary structure, forms a complex with cognate antitoxin MazE3.

In terms of biological role, toxic component of a type II toxin-antitoxin (TA) system. Acts as an endoribonuclease, cleaving in U-rich regions. Neutralized by cognate antitoxin MazE3. In Mycobacterium tuberculosis (strain CDC 1551 / Oshkosh), this protein is Endoribonuclease MazF3 (mazF3).